Reading from the N-terminus, the 1192-residue chain is Reticulon-4 (1192 aa).

M1 bears the N-acetylmethionine mark. The interval 1–204 (MEDLDQSPLV…ASEPVIRSSA (204 aa)) is disordered. Topologically, residues 1–1018 (MEDLDQSPLV…LYWRDIKKTG (1018 aa)) are cytoplasmic. 2 positions are modified to phosphoserine: S7 and S15. Residues 31–53 (PEDEEEEEEEEEEDEDEDLEELE) show a composition bias toward acidic residues. The span at 65–77 (AAPVPTAPAAGAP) shows a compositional bias: low complexity. Positions 87–101 (PPAPRGPLPAAPPVA) are enriched in pro residues. S107 is modified (phosphoserine). Positions 110–132 (PSPVSSTVPAPSPLSAAAVSPSK) are enriched in low complexity. Residues 141-150 (ARPPPPPPAS) show a composition bias toward pro residues. S152 carries the phosphoserine modification. Residues 159-173 (WTPPAPAPAAPPSTP) are compositionally biased toward pro residues. Phosphoserine occurs at positions 181, 182, 184, 361, and 446. The tract at residues 427–458 (DSLEQTNHEKDSESSNDDTSFPSTPEGIKDRS) is disordered. T450 is modified (phosphothreonine). S511 carries the post-translational modification Phosphoserine. The segment covering 722-734 (AKVEQPVPDHSEL) has biased composition (basic and acidic residues). Positions 722 to 762 (AKVEQPVPDHSELVEDSSPDSEPVDLFSDDSIPDVPQKQDE) are disordered. Residues 735–753 (VEDSSPDSEPVDLFSDDSI) show a composition bias toward acidic residues. Position 749 is a phosphoserine (S749). T858 carries the phosphothreonine modification. 2 positions are modified to phosphoserine: S881 and S991. One can recognise a Reticulon domain in the interval 1005-1192 (VVDLLYWRDI…KIPGLKRKAE (188 aa)). A helical membrane pass occupies residues 1019-1039 (VVFGASLFLLLSLTVFSIVSV). Topologically, residues 1040–1133 (TAYIALALLS…LMWVFTYVGA (94 aa)) are lumenal. At K1104 the chain carries N6-acetyllysine. Residues 1134–1154 (LFNGLTLLILALISLFSVPVI) traverse the membrane as a helical segment. Residues 1155 to 1192 (YERHQAQIDHYLGLANKNVKDAMAKIQAKIPGLKRKAE) are Cytoplasmic-facing.

In terms of assembly, binds to RTN4R. Interacts with ATL1. Interacts with TMEM170A. Interacts with RTN4IP1. As to quaternary structure, interacts in trans with CNTNAP1. Interacts with REEP5. Interacts with synaptic plasticity regulator PANTS; the interaction results in enhanced RTN4-mediated inhibition of AMPA receptor clustering. Interacts with GPR50. Homodimer. Interacts with BAD/Bcl-xl and BCL2. Interact with RTN3. Interacts with NGBR. Interacts with SPTLC1. Interacts with GRAMD4. Interacts with CDH5. Interacts with BACE1 and BACE2. Interacts with REEP5. Interacts with RETREG3. In terms of assembly, interacts with BACE1 and BACE2. Interacts with TMEM33. As to expression, isoform A: is specifically expressed in brain and testis and weakly in heart and skeletal muscle. Isoform B: widely expressed except for the liver. Highly expressed in endothelial cells and vascular smooth muscle cells, including blood vessels and mesenteric arteries. Isoform C: is expressed in brain, skeletal muscle and adipocytes. Isoform D is testis-specific.

It is found in the endoplasmic reticulum membrane. It localises to the cell membrane. The protein localises to the synapse. Its subcellular location is the cell junction. Required to induce the formation and stabilization of endoplasmic reticulum (ER) tubules. They regulate membrane morphogenesis in the ER by promoting tubular ER production. They influence nuclear envelope expansion, nuclear pore complex formation and proper localization of inner nuclear membrane proteins. However each isoform have specific functions mainly depending on their tissue expression specificities. Functionally, developmental neurite growth regulatory factor with a role as a negative regulator of axon-axon adhesion and growth, and as a facilitator of neurite branching. Regulates neurite fasciculation, branching and extension in the developing nervous system. Involved in down-regulation of growth, stabilization of wiring and restriction of plasticity in the adult CNS. Regulates the radial migration of cortical neurons via an RTN4R-LINGO1 containing receptor complex. Acts as a negative regulator of central nervous system angiogenesis. Inhibits spreading, migration and sprouting of primary brain microvascular endothelial cells (MVECs). Also induces the retraction of MVECs lamellipodia and filopodia in a ROCK pathway-dependent manner. Its function is as follows. Mainly function in endothelial cells and vascular smooth muscle cells, is also involved in immune system regulation. Modulator of vascular remodeling, promotes the migration of endothelial cells but inhibits the migration of vascular smooth muscle cells. Regulates endothelial sphingolipid biosynthesis with direct effects on vascular function and blood pressure. Inhibits serine palmitoyltransferase, SPTLC1, the rate-limiting enzyme of the novo sphingolipid biosynthetic pathway, thereby controlling production of endothelial sphingosine-1-phosphate (S1P). Required to promote macrophage homing and functions such as cytokine/chemokine gene expression involved in angiogenesis, arteriogenesis and tissue repair. Mediates ICAM1 induced transendothelial migration of leukocytes such as monocytes and neutrophils and acute inflammation. Necessary for immune responses triggered by nucleic acid sensing TLRs, such as TLR9, is required for proper TLR9 location to endolysosomes. Also involved in immune response to LPS. Plays a role in liver regeneration through the modulation of hepatocytes proliferation. Reduces the anti-apoptotic activity of Bcl-xl and Bcl-2. This is likely consecutive to their change in subcellular location, from the mitochondria to the endoplasmic reticulum, after binding and sequestration. With isoform C, inhibits BACE1 activity and amyloid precursor protein processing. In terms of biological role, regulates cardiomyocyte apoptosis upon hypoxic conditions. With isoform B, inhibits BACE1 activity and amyloid precursor protein processing. The protein is Reticulon-4 of Homo sapiens (Human).